A 99-amino-acid polypeptide reads, in one-letter code: RNA-binding protein Hfq (99 aa).

Residues 9–68 (DPFLNALRRERVPVSIYLVNGIKLQGQIESFDQFVILLKNTVSQMVYKHAISTVVPSRPV) form the Sm domain. The interval 64 to 99 (PSRPVSHHSNNPGGGSNYHGNNTAASQQSQEADDAE) is disordered.

This sequence belongs to the Hfq family. In terms of assembly, homohexamer.

Functionally, RNA chaperone that binds small regulatory RNA (sRNAs) and mRNAs to facilitate mRNA translational regulation in response to envelope stress, environmental stress and changes in metabolite concentrations. Also binds with high specificity to tRNAs. The polypeptide is RNA-binding protein Hfq (Pectobacterium carotovorum subsp. carotovorum (strain PC1)).